We begin with the raw amino-acid sequence, 203 residues long: WUSCHEL-related homeobox 3 (203 aa).

The segment at residues threonine 4–leucine 68 is a DNA-binding region (homeobox; WUS-type). 3 disordered regions span residues cysteine 73–alanine 95, leucine 109–glutamine 135, and serine 180–asparagine 203. A compositionally biased stretch (pro residues) spans proline 80–proline 91. Over residues leucine 109–proline 118 the composition is skewed to basic residues. Composition is skewed to low complexity over residues tyrosine 119 to glutamine 135 and cysteine 190 to asparagine 203.

It belongs to the WUS homeobox family.

The protein localises to the nucleus. Functionally, transcription factor which may be involved in developmental processes. The chain is WUSCHEL-related homeobox 3 (WOX3) from Oryza sativa subsp. indica (Rice).